A 685-amino-acid polypeptide reads, in one-letter code: Glycine--tRNA ligase beta subunit (685 aa).

Belongs to the class-II aminoacyl-tRNA synthetase family. Tetramer of two alpha and two beta subunits.

Its subcellular location is the cytoplasm. It carries out the reaction tRNA(Gly) + glycine + ATP = glycyl-tRNA(Gly) + AMP + diphosphate. This Azotobacter vinelandii (strain DJ / ATCC BAA-1303) protein is Glycine--tRNA ligase beta subunit.